The primary structure comprises 1470 residues: ABC transporter G family member 48 (1470 aa).

The interval methionine 1–asparagine 47 is disordered. A compositionally biased stretch (polar residues) spans glycine 9–arginine 24. The 274-residue stretch at glycine 172–glutamate 445 folds into the ABC transporter 1 domain. Glycine 205 to serine 212 serves as a coordination point for ATP. Positions glutamate 523 to phenylalanine 736 constitute an ABC transmembrane type-2 1 domain. 6 helical membrane-spanning segments follow: residues phenylalanine 541–phenylalanine 561, phenylalanine 577–glutamine 597, valine 629–phenylalanine 649, phenylalanine 660–isoleucine 680, valine 686–isoleucine 706, and phenylalanine 772–leucine 792. The interval glutamine 828–threonine 852 is disordered. A compositionally biased stretch (low complexity) spans asparagine 832 to serine 843. Positions leucine 869–proline 1121 constitute an ABC transporter 2 domain. ATP is bound at residue glycine 914 to threonine 921. In terms of domain architecture, ABC transmembrane type-2 2 spans serine 1194–phenylalanine 1408. The next 7 membrane-spanning stretches (helical) occupy residues alanine 1215–glutamine 1234, leucine 1249–valine 1271, valine 1301–tyrosine 1321, phenylalanine 1331–alanine 1351, alanine 1359–valine 1379, tryptophan 1389–glycine 1409, and phenylalanine 1439–glycine 1459.

It belongs to the ABC transporter superfamily. ABCG family. PDR (TC 3.A.1.205) subfamily.

Its subcellular location is the membrane. Its function is as follows. May be a general defense protein. The protein is ABC transporter G family member 48 of Oryza sativa subsp. japonica (Rice).